A 343-amino-acid chain; its full sequence is Sodium/bile acid cotransporter 7-B (343 aa).

Residues 1–9 (MGLLERLRK) lie on the Cytoplasmic side of the membrane. A helical transmembrane segment spans residues 10–30 (EWFIIGIILVIVAAKLEPTIG). At 31 to 37 (EKGGPLK) the chain is on the extracellular side. The helical transmembrane segment at 38–58 (PEITITYIAVSAIFFNSGLSL) threads the bilayer. Residues 59–71 (KTEELTNALMHVK) lie on the Cytoplasmic side of the membrane. A helical transmembrane segment spans residues 72-92 (LHLFVQLFTLVFFPTAIWIFL). At 93–116 (QVLSLTPINEWLLKGLQTVSCMPP) the chain is on the extracellular side. The chain crosses the membrane as a helical span at residues 117-137 (PVSSAVILTKAVGGNEAAAIF). A topological domain (cytoplasmic) is located at residue Asn138. Residues 139-159 (SAFGSFLGIVVTPLLLLLFLG) traverse the membrane as a helical segment. The Extracellular segment spans residues 160–163 (SSSS). The helical transmembrane segment at 164 to 184 (VPFTSIFSQLFMTVVVPLIIG) threads the bilayer. Topologically, residues 185–201 (QIVRRYIKDWLERKKPP) are cytoplasmic. A helical transmembrane segment spans residues 202-222 (FGAISSCVLLMIIYTTFCDTF). Topologically, residues 223 to 234 (SNPNIDLDTFSL) are extracellular. The chain crosses the membrane as a helical span at residues 235–255 (VVIVFIIFFIQLAFMLLTFLF). At 256–270 (STSKNSGFTPADTVA) the chain is on the cytoplasmic side. A helical membrane pass occupies residues 271-291 (IVFCSTHKSLTLGIPMLKIVF). At 292 to 298 (AGYEHLS) the chain is on the extracellular side. A helical membrane pass occupies residues 299–319 (LISVPLLIYHPAQILLGSVLV). Residues 320 to 343 (PTIKSWMLSRRKALKLTRQPKIPL) lie on the Cytoplasmic side of the membrane.

It belongs to the bile acid:sodium symporter (BASS) (TC 2.A.28) family.

It is found in the cell membrane. The protein resides in the endoplasmic reticulum membrane. It localises to the golgi apparatus membrane. Its function is as follows. Involved in teeth and skeletal development. Has an essential role in the biosynthesis and trafficking of glycosaminoglycans and glycoproteins to produce a proper functioning extracellular matrix. Required for extracellular matrix mineralization. Also involved in the regulation of cellular calcium homeostasis. Does not show transport activity towards bile acids or steroid sulfates. This Xenopus laevis (African clawed frog) protein is Sodium/bile acid cotransporter 7-B (slc10a7-b).